Reading from the N-terminus, the 1108-residue chain is Transmembrane protein 132C (1108 aa).

The first 27 residues, Met-1 to Gly-27, serve as a signal peptide directing secretion. Residues Lys-28–Asp-922 are Extracellular-facing. N-linked (GlcNAc...) asparagine glycosylation is found at Asn-316 and Asn-373. Basic and acidic residues predominate over residues His-820–Gln-836. Residues His-820–Thr-857 form a disordered region. Residues Leu-923–Ile-943 traverse the membrane as a helical segment. Over Asn-944–Ala-1108 the chain is Cytoplasmic. Residues Gln-1022–Asn-1072 are disordered.

Belongs to the TMEM132 family.

The protein resides in the membrane. The polypeptide is Transmembrane protein 132C (TMEM132C) (Homo sapiens (Human)).